A 206-amino-acid chain; its full sequence is CASP-like protein 1F1 (206 aa).

The Cytoplasmic portion of the chain corresponds to 1–43; sequence MCFQFSILYTCYLAHFGVFPRKYLVMAGIEAKFQQNPPLGTHK. Residues 44-64 form a helical membrane-spanning segment; it reads LFLGAHICLRILTVTATLTAA. The Extracellular portion of the chain corresponds to 65 to 92; the sequence is WMMITSKQTVEVYGIQVEAKYSYSSAFK. A helical membrane pass occupies residues 93–113; the sequence is FFSYANAIACGCSVLTLFPAF. At 114–124 the chain is on the cytoplasmic side; that stretch reads SLFYRGSTPMK. A helical membrane pass occupies residues 125-145; the sequence is FFFLFLHDLCMMSLVLAGCAA. The Extracellular portion of the chain corresponds to 146 to 177; sequence ATAIGYVGRYGNNHAGWMAICDQFDEYCNRIR. The chain crosses the membrane as a helical span at residues 178–198; that stretch reads LSLMFSYLAFVFILMLTIMSA. Topologically, residues 199–206 are cytoplasmic; the sequence is NKSREIRV.

This sequence belongs to the Casparian strip membrane proteins (CASP) family. As to quaternary structure, homodimer and heterodimers.

The protein resides in the cell membrane. The chain is CASP-like protein 1F1 from Vitis vinifera (Grape).